Consider the following 901-residue polypeptide: Protein translocase subunit SecA (901 aa).

ATP contacts are provided by residues Q85, 103–107 (GEGKT), and D492. The interval 828 to 901 (GLVTDDGGNP…PKNRRNKKRR (74 aa)) is disordered. The segment covering 871-881 (DGQKPRGEGNR) has biased composition (basic and acidic residues). Basic residues predominate over residues 882 to 901 (AARRSAASKKPKNRRNKKRR).

This sequence belongs to the SecA family. In terms of assembly, monomer and homodimer. Part of the essential Sec protein translocation apparatus which comprises SecA, SecYEG and auxiliary proteins SecDF. Other proteins may also be involved.

Its subcellular location is the cell membrane. The protein resides in the cytoplasm. The catalysed reaction is ATP + H2O + cellular proteinSide 1 = ADP + phosphate + cellular proteinSide 2.. Part of the Sec protein translocase complex. Interacts with the SecYEG preprotein conducting channel. Has a central role in coupling the hydrolysis of ATP to the transfer of proteins into and across the cell membrane, serving as an ATP-driven molecular motor driving the stepwise translocation of polypeptide chains across the membrane. This Cutibacterium acnes (strain DSM 16379 / KPA171202) (Propionibacterium acnes) protein is Protein translocase subunit SecA.